We begin with the raw amino-acid sequence, 212 residues long: Nitric oxide synthase (212 aa).

Heme b is bound at residue Y11. The interval 30 to 50 is calmodulin-binding; sequence KKRAIGFKKLAKAVKFSTKLM. The Flavodoxin-like domain maps to 60–212; sequence ATILYATETG…AVDTLLEELG (153 aa). Residues 155–175 form a disordered region; that stretch reads SYSDSRKSSSDEPEHKDNFES. The segment covering 158–173 has biased composition (basic and acidic residues); that stretch reads DSRKSSSDEPEHKDNF. An FMN-binding site is contributed by 186–212; it reads AFGLGSRAYPHFCAFARAVDTLLEELG.

Belongs to the NOS family. It depends on heme b as a cofactor. FAD is required as a cofactor. The cofactor is FMN.

It carries out the reaction 2 L-arginine + 3 NADPH + 4 O2 + H(+) = 2 L-citrulline + 2 nitric oxide + 3 NADP(+) + 4 H2O. Produces nitric oxide (NO) which is a messenger molecule with diverse functions throughout the body. This Squalus acanthias (Spiny dogfish) protein is Nitric oxide synthase.